The chain runs to 673 residues: MKMTRLYPLALGGLLLPAIANAQTSQQDESTLVVTASKQSSRSASANNVSSTVVSAPELSDAGVTASDKLPRVLPGLNIENSGNMLFSTISLRGVSSAQDFYNPAVTLYVDGVPQLSTNTIQALTDVQSVELLRGPQGTLYGKSAQGGIINIVTQQPDSTPRGYIEGGVSSRDSYRSKFNLSGPIQDGLLYGSVTLLRQVDDGDMINPATGSDDLGGTRASIGNVKLRLAPDDQPWEMGFAASRECTRATQDAYVGWNDIKGRKLSISDGSPDPYMRRCTDSQTLSGKYTTDDWVFNLISAWQQQHYSRTFPSGSLIVNMPQRWNQDVQELRAATLGDARTVDMVFGLYRQNTREKLNSAYDMPTMPYLSSTGYTTAETLAAYSDLTWHLTDRFDIGGGVRFSHDKSSTQYHGSMLGNPFGDQGKSNDDQVLGQLSAGYMLTDDWRVYTRVAQGYKPSGYNIVPTAGLDAKPFVAEKSINYELGTRYETADVTLQAATFYTHTKDMQLYSGPVRMQTLSNAGKADATGVELEAKWRFAPGWSWDINGNVIRSEFTNDSELYHGNRVPFVPRYGAGSSVNGVIDTRYGALMPRLAVNLVGPHYFDGDNQLRQGTYATLDSSLGWQATERMNISVYVDNLFDRRYRTYGYMNGSSAVAQVNMGRTVGINTRIDFF.

Residues M1 to A22 form the signal peptide. A TonB box motif is present at residues S30–S37. Residues S41 to Q155 enclose the TBDR plug domain. Residues T160–F672 form the TBDR beta-barrel domain. The TonB C-terminal box motif lies at Q657–F673.

Belongs to the TonB-dependent receptor family.

Its subcellular location is the cell outer membrane. Its function is as follows. Receptor for the bacteriocin pesticin and for the siderophore yersiniabactin. The chain is Pesticin receptor (fyuA) from Yersinia pestis.